The sequence spans 1328 residues: Retrovirus-related Pol polyprotein from transposon TNT 1-94 (1328 aa).

Residues 189–265 (PENQGQALIT…SGQKNDDNTA (77 aa)) are disordered. A compositionally biased stretch (basic residues) spans 217 to 229 (ARGKSKNRSKSRV). The segment at 230-247 (RNCYNCNQPGHFKRDCPN) adopts a CCHC-type zinc-finger fold. Residues 241–253 (FKRDCPNPRKGKG) are compositionally biased toward basic and acidic residues. The For protease activity role is filled by D297. In terms of domain architecture, Integrase catalytic spans 473–642 (SSERKLNILD…IPERVWTNKE (170 aa)). Polar residues predominate over residues 729 to 742 (TIPSTSNNPTSAES). The tract at residues 729–800 (TIPSTSNNPT…RVESRRYPST (72 aa)) is disordered. A compositionally biased stretch (basic and acidic residues) spans 770–798 (EVEHPTQGEEQHQPLRRSERPRVESRRYP).

It catalyses the reaction DNA(n) + a 2'-deoxyribonucleoside 5'-triphosphate = DNA(n+1) + diphosphate. This is Retrovirus-related Pol polyprotein from transposon TNT 1-94 from Nicotiana tabacum (Common tobacco).